A 480-amino-acid chain; its full sequence is Islet cell autoantigen 1 (480 aa).

An AH domain is found at 50–253 (ASDADLDAKL…TSHTMAAIHE (204 aa)). Composition is skewed to basic and acidic residues over residues 276–293 (LVEK…REAV) and 306–321 (ENQH…EEGK). Disordered regions lie at residues 276–338 (LVEK…ACSG) and 400–421 (LKEP…IGSA).

The protein localises to the cytoplasm. The protein resides in the cytosol. It localises to the golgi apparatus membrane. Its subcellular location is the cytoplasmic vesicle. It is found in the secretory vesicle membrane. The protein localises to the secretory vesicle. The protein resides in the synaptic vesicle membrane. Its function is as follows. May play a role in neurotransmitter secretion. The chain is Islet cell autoantigen 1 from Rattus norvegicus (Rat).